The primary structure comprises 182 residues: Ribosome-recycling factor (182 aa).

The protein belongs to the RRF family.

Its subcellular location is the cytoplasm. Functionally, responsible for the release of ribosomes from messenger RNA at the termination of protein biosynthesis. May increase the efficiency of translation by recycling ribosomes from one round of translation to another. In Prochlorococcus marinus (strain MIT 9312), this protein is Ribosome-recycling factor.